The primary structure comprises 333 residues: Gap junction alpha-4 protein (333 aa).

Over 1–20 (MGDWGFLEKLLDQVQEHSTV) the chain is Cytoplasmic. Residues 21–40 (VGKIWLTVLFIFRILILGLA) form a helical membrane-spanning segment. Over 41–76 (GESVWGDEQSDFECNTAQPGCTNVCYDQAFPISHIR) the chain is Extracellular. The chain crosses the membrane as a helical span at residues 77–99 (YWVLQFLFVSTPTLVYLGHVIYL). At 100-148 (SRREERLRQKEGELRALPAKDPQVERALAAVERQMAKISVAEDGRLRIR) the chain is on the cytoplasmic side. Residues 149 to 165 (GALMGTYVASVLCKSVL) traverse the membrane as a helical segment. Over 166–207 (EAGFLYGQWRLYGWTMEPVFVCQRAPCPYLVDCFVSRPTEKT) the chain is Extracellular. A helical membrane pass occupies residues 208 to 230 (IFIIFMLVVGLISLVLNLLELVH). Residues 231 to 333 (LLCRCLSRGM…SSSASKKQYV (103 aa)) are Cytoplasmic-facing. Residues 292 to 333 (ANLTTEERLASSRPPLFLDPPPQNGQKPPSRPSSSASKKQYV) are disordered. The segment covering 323 to 333 (PSSSASKKQYV) has biased composition (low complexity).

The protein belongs to the connexin family. Alpha-type (group II) subfamily. A connexon is composed of a hexamer of connexins. As to expression, expressed in multiple organs and tissues, including heart, uterus, ovary, and blood vessel endothelium.

It is found in the cell membrane. The protein resides in the cell junction. It localises to the gap junction. Its function is as follows. One gap junction consists of a cluster of closely packed pairs of transmembrane channels, the connexons, through which materials of low MW diffuse from one cell to a neighboring cell. The protein is Gap junction alpha-4 protein (GJA4) of Homo sapiens (Human).